The primary structure comprises 337 residues: Ornithine carbamoyltransferase (337 aa).

Carbamoyl phosphate-binding positions include 57–60, Q84, R108, and 135–138; these read STRT and HPTQ. L-ornithine is bound by residues N167, D231, and 235 to 236; that span reads SM. Carbamoyl phosphate contacts are provided by residues 272 to 273 and R317; that span reads CL.

It belongs to the aspartate/ornithine carbamoyltransferase superfamily. OTCase family.

Its subcellular location is the cytoplasm. The enzyme catalyses carbamoyl phosphate + L-ornithine = L-citrulline + phosphate + H(+). It functions in the pathway amino-acid degradation; L-arginine degradation via ADI pathway; carbamoyl phosphate from L-arginine: step 2/2. Functionally, reversibly catalyzes the transfer of the carbamoyl group from carbamoyl phosphate (CP) to the N(epsilon) atom of ornithine (ORN) to produce L-citrulline. This Streptococcus uberis (strain ATCC BAA-854 / 0140J) protein is Ornithine carbamoyltransferase.